A 105-amino-acid polypeptide reads, in one-letter code: Mini zinc finger protein 2 (105 aa).

A disordered region spans residues 1–29 (MGPQQDRSAAKPYANGSTAAAAAAGRKEN). Residues 35-84 (YRECQRNHAASIGGHAVDGCREFMASGADGTAAALLCAACGCHQSFHRRE) form a ZF-HD dimerization-type; degenerate zinc finger.

As to quaternary structure, homo- and heterodimers.

Its subcellular location is the cytoplasm. Its function is as follows. Inhibits zinc finger homeodomain (ZHD) transcription factors, by interacting with them to prevent both their nuclear localization and their DNA-binding properties. The chain is Mini zinc finger protein 2 (MIF2) from Oryza sativa subsp. indica (Rice).